The following is a 613-amino-acid chain: Dihydroxy-acid dehydratase (613 aa).

Asp81 contributes to the Mg(2+) binding site. [2Fe-2S] cluster is bound at residue Cys122. Asp123 and Lys124 together coordinate Mg(2+). Residue Lys124 is modified to N6-carboxylysine. Residue Cys195 coordinates [2Fe-2S] cluster. Mg(2+) is bound at residue Glu491. The Proton acceptor role is filled by Ser517.

It belongs to the IlvD/Edd family. In terms of assembly, homodimer. The cofactor is [2Fe-2S] cluster. It depends on Mg(2+) as a cofactor.

It carries out the reaction (2R)-2,3-dihydroxy-3-methylbutanoate = 3-methyl-2-oxobutanoate + H2O. The catalysed reaction is (2R,3R)-2,3-dihydroxy-3-methylpentanoate = (S)-3-methyl-2-oxopentanoate + H2O. The protein operates within amino-acid biosynthesis; L-isoleucine biosynthesis; L-isoleucine from 2-oxobutanoate: step 3/4. It functions in the pathway amino-acid biosynthesis; L-valine biosynthesis; L-valine from pyruvate: step 3/4. In terms of biological role, functions in the biosynthesis of branched-chain amino acids. Catalyzes the dehydration of (2R,3R)-2,3-dihydroxy-3-methylpentanoate (2,3-dihydroxy-3-methylvalerate) into 2-oxo-3-methylpentanoate (2-oxo-3-methylvalerate) and of (2R)-2,3-dihydroxy-3-methylbutanoate (2,3-dihydroxyisovalerate) into 2-oxo-3-methylbutanoate (2-oxoisovalerate), the penultimate precursor to L-isoleucine and L-valine, respectively. This is Dihydroxy-acid dehydratase from Vibrio atlanticus (strain LGP32) (Vibrio splendidus (strain Mel32)).